Consider the following 325-residue polypeptide: HPr kinase/phosphorylase (325 aa).

Residues H152 and K173 contribute to the active site. Residue 167–174 (GESGLGKS) participates in ATP binding. S174 is a Mg(2+) binding site. D191 serves as the catalytic Proton acceptor; for phosphorylation activity. Proton donor; for dephosphorylation activity. Residues 215-224 (LEVRGIGLLD) form an important for the catalytic mechanism of both phosphorylation and dephosphorylation region. E216 contacts Mg(2+). The active site involves R258. Residues 279–284 (AVDAGR) are important for the catalytic mechanism of dephosphorylation.

It belongs to the HPrK/P family. In terms of assembly, homohexamer. Requires Mg(2+) as cofactor.

It catalyses the reaction [HPr protein]-L-serine + ATP = [HPr protein]-O-phospho-L-serine + ADP + H(+). The enzyme catalyses [HPr protein]-O-phospho-L-serine + phosphate + H(+) = [HPr protein]-L-serine + diphosphate. Its function is as follows. Catalyzes the ATP- as well as the pyrophosphate-dependent phosphorylation of a specific serine residue in HPr, a phosphocarrier protein of the phosphoenolpyruvate-dependent sugar phosphotransferase system (PTS). HprK/P also catalyzes the pyrophosphate-producing, inorganic phosphate-dependent dephosphorylation (phosphorolysis) of seryl-phosphorylated HPr (P-Ser-HPr). The polypeptide is HPr kinase/phosphorylase (Leptothrix cholodnii (strain ATCC 51168 / LMG 8142 / SP-6) (Leptothrix discophora (strain SP-6))).